A 447-amino-acid polypeptide reads, in one-letter code: Argininosuccinate synthase (447 aa).

ATP contacts are provided by residues 17-25 (AFSGGLDTS) and A43. Y99 serves as a coordination point for L-citrulline. Residues G129 and T131 each coordinate ATP. L-aspartate is bound by residues T131, N135, and D136. N135 contacts L-citrulline. Residue D136 participates in ATP binding. Residues R139 and S192 each coordinate L-citrulline. Position 194 (D194) interacts with ATP. The L-citrulline site is built by T201, E203, and E280.

It belongs to the argininosuccinate synthase family. Type 2 subfamily. Homotetramer.

It is found in the cytoplasm. It carries out the reaction L-citrulline + L-aspartate + ATP = 2-(N(omega)-L-arginino)succinate + AMP + diphosphate + H(+). Its pathway is amino-acid biosynthesis; L-arginine biosynthesis; L-arginine from L-ornithine and carbamoyl phosphate: step 2/3. This chain is Argininosuccinate synthase, found in Citrobacter koseri (strain ATCC BAA-895 / CDC 4225-83 / SGSC4696).